A 136-amino-acid chain; its full sequence is Large ribosomal subunit protein uL16 (136 aa).

This sequence belongs to the universal ribosomal protein uL16 family. In terms of assembly, part of the 50S ribosomal subunit.

Binds 23S rRNA and is also seen to make contacts with the A and possibly P site tRNAs. The sequence is that of Large ribosomal subunit protein uL16 from Rickettsia prowazekii (strain Madrid E).